The chain runs to 110 residues: Small ribosomal subunit protein bS16 (110 aa).

Positions 87–110 are disordered; that stretch reads ARNNPEKAVPRKERKAAAEAAAKK.

The protein belongs to the bacterial ribosomal protein bS16 family.

The sequence is that of Small ribosomal subunit protein bS16 from Rhodopseudomonas palustris (strain HaA2).